We begin with the raw amino-acid sequence, 141 residues long: Hemoglobin subunit alpha (141 aa).

Residues 1–141 enclose the Globin domain; sequence VLSANDKSNV…VSTVLTSKYR (141 aa). At Ser3 the chain carries Phosphoserine. N6-succinyllysine is present on residues Lys7 and Lys11. Position 16 is an N6-acetyllysine; alternate (Lys16). Position 16 is an N6-succinyllysine; alternate (Lys16). Tyr24 carries the phosphotyrosine modification. Ser35 carries the post-translational modification Phosphoserine. Lys40 carries the N6-succinyllysine modification. Ser49 is subject to Phosphoserine. His58 is an O2 binding site. His87 lines the heme b pocket. A Phosphoserine modification is found at Ser102. Thr108 is subject to Phosphothreonine. Ser124 carries the phosphoserine modification. Phosphothreonine is present on residues Thr134 and Thr137. Ser138 carries the phosphoserine modification.

Belongs to the globin family. In terms of assembly, heterotetramer of two alpha chains and two beta chains. Red blood cells.

Its function is as follows. Involved in oxygen transport from the lung to the various peripheral tissues. In terms of biological role, hemopressin acts as an antagonist peptide of the cannabinoid receptor CNR1. Hemopressin-binding efficiently blocks cannabinoid receptor CNR1 and subsequent signaling. This chain is Hemoglobin subunit alpha (HBA), found in Hippopotamus amphibius (Hippopotamus).